A 248-amino-acid polypeptide reads, in one-letter code: Probable transcriptional regulatory protein Atu3727 (248 aa).

The disordered stretch occupies residues 1-21; it reads MAGHSQFKNIMHRKGKQDSVR.

It belongs to the TACO1 family.

The protein resides in the cytoplasm. This is Probable transcriptional regulatory protein Atu3727 from Agrobacterium fabrum (strain C58 / ATCC 33970) (Agrobacterium tumefaciens (strain C58)).